Here is a 247-residue protein sequence, read N- to C-terminus: MSNQACFSNPGPELWNALGWHPSSEQLEQMIALQALLRQWNARVNLTRLVEGGDYWIMQVFDSLWPLQSELQNAQQPRRCIDIGSGGGFPGLVLAIALPGARITLVDSVGRKTAALKAMAAKLGLTSRVTVRSERAEFTGQDPCCRGLFDLAMARAVSTAPVVAEYLVPLLKPSGEALLFRGHWSPNDAKDLAKALRLLQADLIKMERRELPDNRGVRHQLRLRATLPCPATFPRPIGVPAKNPLGS.

S-adenosyl-L-methionine contacts are provided by residues G84, F89, 136-137 (AE), and R155.

Belongs to the methyltransferase superfamily. RNA methyltransferase RsmG family.

The protein localises to the cytoplasm. In terms of biological role, specifically methylates the N7 position of a guanine in 16S rRNA. This Prochlorococcus marinus (strain MIT 9313) protein is Ribosomal RNA small subunit methyltransferase G.